The primary structure comprises 630 residues: 1-deoxy-D-xylulose-5-phosphate synthase (630 aa).

Thiamine diphosphate is bound by residues H72 and 113-115; that span reads GHS. A Mg(2+)-binding site is contributed by D144. Thiamine diphosphate contacts are provided by residues 145 to 146, N173, Y284, and E367; that span reads GA. N173 contacts Mg(2+).

Belongs to the transketolase family. DXPS subfamily. In terms of assembly, homodimer. The cofactor is Mg(2+). Thiamine diphosphate serves as cofactor.

The enzyme catalyses D-glyceraldehyde 3-phosphate + pyruvate + H(+) = 1-deoxy-D-xylulose 5-phosphate + CO2. It functions in the pathway metabolic intermediate biosynthesis; 1-deoxy-D-xylulose 5-phosphate biosynthesis; 1-deoxy-D-xylulose 5-phosphate from D-glyceraldehyde 3-phosphate and pyruvate: step 1/1. Functionally, catalyzes the acyloin condensation reaction between C atoms 2 and 3 of pyruvate and glyceraldehyde 3-phosphate to yield 1-deoxy-D-xylulose-5-phosphate (DXP). This Bacillus cereus (strain AH820) protein is 1-deoxy-D-xylulose-5-phosphate synthase.